The following is a 92-amino-acid chain: YcgL domain-containing protein Sputcn32_1766 (92 aa).

A YcgL domain is found at 1–85; that stretch reads MLCTVYKSTR…PQVNLLAEHK (85 aa).

The protein is YcgL domain-containing protein Sputcn32_1766 of Shewanella putrefaciens (strain CN-32 / ATCC BAA-453).